Reading from the N-terminus, the 258-residue chain is Indole-3-glycerol phosphate synthase (258 aa).

The protein belongs to the TrpC family.

It carries out the reaction 1-(2-carboxyphenylamino)-1-deoxy-D-ribulose 5-phosphate + H(+) = (1S,2R)-1-C-(indol-3-yl)glycerol 3-phosphate + CO2 + H2O. It functions in the pathway amino-acid biosynthesis; L-tryptophan biosynthesis; L-tryptophan from chorismate: step 4/5. This chain is Indole-3-glycerol phosphate synthase, found in Geobacillus kaustophilus (strain HTA426).